The primary structure comprises 597 residues: Elongation factor 4 (597 aa).

One can recognise a tr-type G domain in the interval 2 to 184 (KNIRNFSIIA…EIVAKIPAPT (183 aa)). GTP is bound by residues 14–19 (DHGKST) and 131–134 (NKID).

This sequence belongs to the TRAFAC class translation factor GTPase superfamily. Classic translation factor GTPase family. LepA subfamily.

It is found in the cell inner membrane. The catalysed reaction is GTP + H2O = GDP + phosphate + H(+). Functionally, required for accurate and efficient protein synthesis under certain stress conditions. May act as a fidelity factor of the translation reaction, by catalyzing a one-codon backward translocation of tRNAs on improperly translocated ribosomes. Back-translocation proceeds from a post-translocation (POST) complex to a pre-translocation (PRE) complex, thus giving elongation factor G a second chance to translocate the tRNAs correctly. Binds to ribosomes in a GTP-dependent manner. This is Elongation factor 4 from Neisseria meningitidis serogroup C / serotype 2a (strain ATCC 700532 / DSM 15464 / FAM18).